Consider the following 734-residue polypeptide: Putative K(+)-stimulated pyrophosphate-energized sodium pump (734 aa).

The next 5 membrane-spanning stretches (helical) occupy residues 3-23 (SILF…AYYF), 58-78 (IVGC…YGFH), 82-102 (VWVP…GFLG), 134-154 (VMGL…YLLL), and 169-189 (LCVI…QALF). Position 199 (K199) interacts with substrate. Residues D202, D206, N229, and D232 each contribute to the Mg(2+) site. Helical transmembrane passes span 244–264 (LYES…AAFI), 275–295 (AVIA…IGIF), 314–334 (FGTN…LWLL), 336–356 (LDNW…GIVI), 377–397 (SGKT…MLST), 398–418 (AIPV…ASGF), and 423–443 (VGMG…TLGI). A Mg(2+)-binding site is contributed by D455. Helical transmembrane passes span 491–511 (FAIG…IEEI), 557–577 (GMFL…NAVG), 629–649 (ILAP…GLLI), and 650–670 (GGLS…GAWD). Ca(2+) is bound by residues D670, D696, and D700. K703 lines the substrate pocket. The helical transmembrane segment at 712–732 (ILIKLMSMVAIVMAGLTVAWS) threads the bilayer.

The protein belongs to the H(+)-translocating pyrophosphatase (TC 3.A.10) family. K(+)-stimulated subfamily. Homodimer. The cofactor is Mg(2+).

The protein localises to the cell inner membrane. It carries out the reaction Na(+)(in) + diphosphate + H2O = Na(+)(out) + 2 phosphate + H(+). With respect to regulation, requires K(+) for maximal activity. Functionally, sodium pump that utilizes the energy of pyrophosphate hydrolysis as the driving force for Na(+) movement across the membrane. The chain is Putative K(+)-stimulated pyrophosphate-energized sodium pump from Bacteroides thetaiotaomicron (strain ATCC 29148 / DSM 2079 / JCM 5827 / CCUG 10774 / NCTC 10582 / VPI-5482 / E50).